The primary structure comprises 289 residues: Protease HtpX homolog (289 aa).

2 consecutive transmembrane segments (helical) span residues 11-31 and 36-54; these read AALF…IGAG and APIW…YGYW. Residue H138 participates in Zn(2+) binding. E139 is a catalytic residue. Position 142 (H142) interacts with Zn(2+). Helical transmembrane passes span 153-173 and 182-202; these read VAAA…FFGG and LAMI…QMAI. A Zn(2+)-binding site is contributed by E207.

This sequence belongs to the peptidase M48B family. It depends on Zn(2+) as a cofactor.

It localises to the cell membrane. The sequence is that of Protease HtpX homolog from Pseudarthrobacter chlorophenolicus (strain ATCC 700700 / DSM 12829 / CIP 107037 / JCM 12360 / KCTC 9906 / NCIMB 13794 / A6) (Arthrobacter chlorophenolicus).